Here is a 323-residue protein sequence, read N- to C-terminus: Estradiol 17 beta-dehydrogenase 5 (323 aa).

Residues 20–24 (GFGTY) and D50 contribute to the NADP(+) site. Residue Y55 is the Proton donor of the active site. H117 is a substrate binding site. NADP(+)-binding positions include 166–167 (SN), Q190, 216–221 (YSALGS), and 270–280 (KSFSEKRIKEN).

It belongs to the aldo/keto reductase family. Monomer. Three forms are detected, probably due to post-translational modifications. Mainly found in liver. Also expressed weakly in kidney.

In terms of biological role, active toward androgens, estrogens, and xenobiotic substrates. Also exhibits low 20 alpha-HSD activity. Shows a-stereospecificity in hydrogen transfer between cofactors and substrates (A-specific). Preferentially catalyzes the reduction of 4-androstenedione, 5-alpha-androstane-3,17-dione, androsterone and dehydroepiandrosterone to testosterone, dihydrotestosterone, 5-alpha-androstane-3-alpha,17-beta-diol and 5-androstene-3-beta,17-beta-diol, respectively. The protein is Estradiol 17 beta-dehydrogenase 5 (Akr1c6) of Mus musculus (Mouse).